Here is a 148-residue protein sequence, read N- to C-terminus: MAKMHSSGKGRSGSVKPYATAFPTWLTKSVDEIKSDVIQMGNKGVPAPDIGTRLRDEYGIGKASDVLGESITRFLQRNGVVPKIPHDLESLVHRANTLRSHLNIYRKDNSAKYRLILVSSRMYRVARYYKRKMRIPGNWKPKLVELNK.

The protein belongs to the universal ribosomal protein uS15 family.

The protein is Small ribosomal subunit protein uS15 (RPS13) of Encephalitozoon cuniculi (strain GB-M1) (Microsporidian parasite).